The primary structure comprises 128 residues: Probable heavy metal-dependent transcriptional regulator HI_0293 (128 aa).

An HTH merR-type domain is found at Met1 to Leu69. Residues Ser4–Met23 constitute a DNA-binding region (H-T-H motif).

It is found in the cytoplasm. Could be a copper-dependent transcriptional activator of the ATPase HI_0290. In Haemophilus influenzae (strain ATCC 51907 / DSM 11121 / KW20 / Rd), this protein is Probable heavy metal-dependent transcriptional regulator HI_0293.